Consider the following 171-residue polypeptide: Galectin-related protein A (171 aa).

Residues 38 to 170 (PFCGHIKGGL…INGDLQLTKL (133 aa)) enclose the Galectin domain.

Its function is as follows. Does not bind lactose, and may not bind carbohydrates. The sequence is that of Galectin-related protein A (lgalsl-a) from Xenopus laevis (African clawed frog).